Reading from the N-terminus, the 473-residue chain is Dolichyl-diphosphooligosaccharide--protein glycosyltransferase subunit 1B (473 aa).

The signal sequence occupies residues Met1–Ser27. Residues Pro28–Pro439 are Lumenal-facing. Residues Asn307 and Asn361 are each glycosylated (N-linked (GlcNAc...) asparagine). A helical membrane pass occupies residues Ile440–Cys460. Residues Ile461–Ser473 lie on the Cytoplasmic side of the membrane.

The protein belongs to the OST1 family. In terms of assembly, component of the oligosaccharyltransferase (OST) complex.

The protein localises to the endoplasmic reticulum membrane. The protein operates within protein modification; protein glycosylation. In terms of biological role, subunit of the oligosaccharyl transferase (OST) complex that catalyzes the initial transfer of a defined glycan (Glc(3)Man(9)GlcNAc(2) in eukaryotes) from the lipid carrier dolichol-pyrophosphate to an asparagine residue within an Asn-X-Ser/Thr consensus motif in nascent polypeptide chains, the first step in protein N-glycosylation. N-glycosylation occurs cotranslationally and the complex associates with the Sec61 complex at the channel-forming translocon complex that mediates protein translocation across the endoplasmic reticulum (ER). All subunits are required for a maximal enzyme activity. This chain is Dolichyl-diphosphooligosaccharide--protein glycosyltransferase subunit 1B (OST1B), found in Oryza sativa subsp. japonica (Rice).